We begin with the raw amino-acid sequence, 173 residues long: RNA polymerase sigma factor YlaC (173 aa).

Belongs to the sigma-70 factor family. ECF subfamily.

Sigma factors are initiation factors that promote the attachment of RNA polymerase to specific initiation sites and are then released. This sigma factor contributes to oxidative stress resistance. This chain is RNA polymerase sigma factor YlaC (ylaC), found in Bacillus subtilis (strain 168).